A 375-amino-acid polypeptide reads, in one-letter code: MSESAPTPRRERVIVGMSGGVDSSVSALLLLQQGYQVEGLFMKNWDEDDGTEYCTAREDLADAQAVCDRIGIKLHTANFAAEYWDNVFEHFLAEYKAGRTPNPDILCNREIKFKAFLDYALMLGADLIATGHYVRRRDRDGRTELLKGLDPNKDQSYFLHAVGGEQIARSLFPVGELEKPEVRAIAEKHGLATAKKKDSTGICFIGERRFTDFLKQYLPAQPGDIETTEGKVIGRHSGLMYHTIGQRQGLGIGGLKEAGDDPWYVLGKDLQRNVLLVGQGNDHPLLFSRALLASRIYWVNPVELERPRRLRAKVRYRQSDQDCVLEKTAEGYRAVFDEPQRAVTPGQSVVFYDGDVCLGGGVIETAEAWDFGGRP.

Residues 16–23 (GMSGGVDS) and Met42 each bind ATP. The segment at 102–104 (NPD) is interaction with target base in tRNA. The active-site Nucleophile is Cys107. Cys107 and Cys203 form a disulfide bridge. Gly131 contacts ATP. Residues 153 to 155 (KDQ) are interaction with tRNA. Residue Cys203 is the Cysteine persulfide intermediate of the active site. The interaction with tRNA stretch occupies residues 315–316 (RY).

Belongs to the MnmA/TRMU family.

It is found in the cytoplasm. It carries out the reaction S-sulfanyl-L-cysteinyl-[protein] + uridine(34) in tRNA + AH2 + ATP = 2-thiouridine(34) in tRNA + L-cysteinyl-[protein] + A + AMP + diphosphate + H(+). Functionally, catalyzes the 2-thiolation of uridine at the wobble position (U34) of tRNA, leading to the formation of s(2)U34. The chain is tRNA-specific 2-thiouridylase MnmA from Pseudomonas aeruginosa (strain UCBPP-PA14).